Consider the following 206-residue polypeptide: MANACKKKRLLKSVMMPAAVCAAVIGLSALGFAAEGGEGAHHVDTGKQMKDFMWRVIDFAALLGVIIWALKKANAKGALADRTANIEKALREAEEARAAAEKKFAEYSGKLEKANLEIDDIYAAIRKEAELEKERIIAEAKLTADKIREQAAATASQEVLKAKAELRGEAARLAVQMAEQSLRENIKKDDQDRLVNDYLTKVENLH.

Residues 14–34 (VMMPAAVCAAVIGLSALGFAA) traverse the membrane as a helical segment.

The protein belongs to the ATPase B chain family. In terms of assembly, F-type ATPases have 2 components, F(1) - the catalytic core - and F(0) - the membrane proton channel. F(1) has five subunits: alpha(3), beta(3), gamma(1), delta(1), epsilon(1). F(0) has three main subunits: a(1), b(2) and c(10-14). The alpha and beta chains form an alternating ring which encloses part of the gamma chain. F(1) is attached to F(0) by a central stalk formed by the gamma and epsilon chains, while a peripheral stalk is formed by the delta and b chains.

The protein resides in the cell inner membrane. F(1)F(0) ATP synthase produces ATP from ADP in the presence of a proton or sodium gradient. F-type ATPases consist of two structural domains, F(1) containing the extramembraneous catalytic core and F(0) containing the membrane proton channel, linked together by a central stalk and a peripheral stalk. During catalysis, ATP synthesis in the catalytic domain of F(1) is coupled via a rotary mechanism of the central stalk subunits to proton translocation. Its function is as follows. Component of the F(0) channel, it forms part of the peripheral stalk, linking F(1) to F(0). This is ATP synthase subunit b from Geobacter metallireducens (strain ATCC 53774 / DSM 7210 / GS-15).